Here is a 434-residue protein sequence, read N- to C-terminus: Putative ZDHHC-type palmitoyltransferase 1 (434 aa).

2 helical membrane-spanning segments follow: residues 25–45 (AYFIVAMILMLIPEIPFLIFV) and 53–73 (ITAAIYPVSIYFWIASYIFLI). Residues 115 to 165 (KWCETCCLYRPPRANHCGICNNCVERFDHHCPWVGNCIGRRNYQTFLYFLY) enclose the DHHC domain. Cys-145 acts as the S-palmitoyl cysteine intermediate in catalysis. A helical transmembrane segment spans residues 160–180 (FLYFLYSLGFLCIWIMGFCVA). Asn-207, Asn-216, Asn-274, Asn-346, Asn-362, Asn-373, Asn-381, Asn-387, and Asn-393 each carry an N-linked (GlcNAc...) asparagine glycan. Positions 262–330 (TIPTPNNING…ISPPQMLQRQ (69 aa)) are disordered. Residues 267-316 (NNINGNNNNSINNNNNNNNNNNNNNNNNNNNNNNNNNINNGNSGGTTNNG) show a composition bias toward low complexity. The disordered stretch occupies residues 365–434 (TISEDKPKNL…SLNHELQVNV (70 aa)). The span at 373–387 (NLSNSNNNNNTNNKN) shows a compositional bias: low complexity. Residues 409–419 (DDFKSDNDKEI) show a composition bias toward basic and acidic residues. Asn-420 is a glycosylation site (N-linked (GlcNAc...) asparagine). Residues 420 to 434 (NSSSLSLNHELQVNV) are compositionally biased toward polar residues.

The protein belongs to the DHHC palmitoyltransferase family.

Its subcellular location is the membrane. The enzyme catalyses L-cysteinyl-[protein] + hexadecanoyl-CoA = S-hexadecanoyl-L-cysteinyl-[protein] + CoA. The chain is Putative ZDHHC-type palmitoyltransferase 1 from Dictyostelium discoideum (Social amoeba).